We begin with the raw amino-acid sequence, 118 residues long: NMVQFKSMVQCTSTRPWLDYVDYGCNCDIGGTGTPLDELDRCCQTHANCYTEARKFPECAPYYKTYSYTCSGGTITCNADNDECAASVCNCDRTAALCFAGAPYNQNNFDVDLETRCQ.

7 cysteine pairs are disulfide-bonded: Cys-11/Cys-70, Cys-25/Cys-117, Cys-27/Cys-43, Cys-42/Cys-98, Cys-49/Cys-91, Cys-59/Cys-84, and Cys-77/Cys-89.

This sequence belongs to the phospholipase A2 family. Group I subfamily. A49 sub-subfamily. Expressed by the venom gland.

The protein localises to the secreted. In terms of biological role, snake venom phospholipase A2 (PLA2) homolog that lacks both catalytic and neurotoxicity activities. This chain is Acidic phospholipase A2 homolog, found in Bungarus fasciatus (Banded krait).